Consider the following 257-residue polypeptide: Flagellar brake protein YcgR 2 (257 aa).

The region spanning 131–244 (QRREFFRVQT…AERTLQRVVT (114 aa)) is the PilZ domain.

This sequence belongs to the YcgR family. Monomer. Interacts with the flagellar basal bodies.

It is found in the bacterial flagellum basal body. Its function is as follows. Acts as a flagellar brake, regulating swimming and swarming in a bis-(3'-5') cyclic diguanylic acid (c-di-GMP)-dependent manner. Binds 1 c-di-GMP dimer per subunit. Increasing levels of c-di-GMP lead to decreased motility. This is Flagellar brake protein YcgR 2 from Paraburkholderia phytofirmans (strain DSM 17436 / LMG 22146 / PsJN) (Burkholderia phytofirmans).